The following is a 463-amino-acid chain: NADH dehydrogenase [ubiquinone] iron-sulfur protein 2, mitochondrial (463 aa).

The transit peptide at 1–33 directs the protein to the mitochondrion; it reads MAALRALGGLRGVAAQVLRPGAGVRLPIQPSRG. N6-acetyllysine is present on Lys-62. Arg-118 bears the Symmetric dimethylarginine mark. The [4Fe-4S] cluster site is built by Cys-326, Cys-332, and Cys-347.

This sequence belongs to the complex I 49 kDa subunit family. In terms of assembly, core subunit of respiratory chain NADH dehydrogenase (Complex I) which is composed of 45 different subunits. Component of the iron-sulfur (IP) fragment of the enzyme. Interacts with NDUFAF3. Interacts with NDUFAF7. Interacts with CERS2. Requires [4Fe-4S] cluster as cofactor. Post-translationally, dimethylation at Arg-118 by NDUFAF7 takes place after NDUFS2 assembles into the complex I, leading to stabilize the early intermediate complex.

Its subcellular location is the mitochondrion inner membrane. It carries out the reaction a ubiquinone + NADH + 5 H(+)(in) = a ubiquinol + NAD(+) + 4 H(+)(out). In terms of biological role, core subunit of the mitochondrial membrane respiratory chain NADH dehydrogenase (Complex I) which catalyzes electron transfer from NADH through the respiratory chain, using ubiquinone as an electron acceptor. Essential for the catalytic activity and assembly of complex I. Redox-sensitive, critical component of the oxygen-sensing pathway in the pulmonary vasculature which plays a key role in acute pulmonary oxygen-sensing and hypoxic pulmonary vasoconstriction. Plays an important role in carotid body sensing of hypoxia. Essential for glia-like neural stem and progenitor cell proliferation, differentiation and subsequent oligodendrocyte or neuronal maturation. The chain is NADH dehydrogenase [ubiquinone] iron-sulfur protein 2, mitochondrial (NDUFS2) from Pongo pygmaeus (Bornean orangutan).